A 923-amino-acid chain; its full sequence is Calmodulin-binding transcription activator 5 (923 aa).

A DNA-binding region (CG-1) is located at residues 25 to 151 (IQTMLDEAYS…YRETHEVHAA (127 aa)). The segment at 272–372 (VYQNNNSCGA…HSHSDIPEQV (101 aa)) is transcription activation. The ANK repeat unit spans residues 611–640 (QGWTALHWAAYYGREKMVAALLSAGARPNL). 3 consecutive IQ domains span residues 757-786 (NIIA…IQYR), 799-828 (MRKK…SVGV), and 875-904 (LERS…AHEE). The calmodulin-binding stretch occupies residues 824-846 (WSVGVLEKAILRWRLKRKGFRGL). Positions 887-914 (RSKKAQQDYRRMKLAHEEAQLEYDGMQE) form a coiled coil.

The protein belongs to the CAMTA family. Expressed in roots, stems, leaves, pollen, top of sepals and siliques.

It is found in the nucleus. In terms of biological role, transcription activator. Binds to the DNA consensus sequence 5'-[ACG]CGCG[GTC]-3'. Regulates transcriptional activity in response to calcium signals. Binds calmodulin in a calcium-dependent manner. Involved in response to cold. Contributes together with CAMTA3 to the positive regulation of the cold-induced expression of DREB1A/CBF3, DREB1B/CBF1 and DREB1C/CBF2. The polypeptide is Calmodulin-binding transcription activator 5 (Arabidopsis thaliana (Mouse-ear cress)).